Consider the following 302-residue polypeptide: Oxygen-dependent coproporphyrinogen-III oxidase (302 aa).

Serine 94 is a binding site for substrate. A divalent metal cation-binding residues include histidine 98 and histidine 108. The active-site Proton donor is the histidine 108. 110 to 112 (NVR) contributes to the substrate binding site. A divalent metal cation is bound by residues histidine 147 and histidine 177. Residues 242-277 (YVEFNLVYDRGTLFGLQTGGRTESILMSMPPLVRWQ) are important for dimerization. 260 to 262 (GGR) serves as a coordination point for substrate.

Belongs to the aerobic coproporphyrinogen-III oxidase family. As to quaternary structure, homodimer. It depends on a divalent metal cation as a cofactor.

Its subcellular location is the cytoplasm. It catalyses the reaction coproporphyrinogen III + O2 + 2 H(+) = protoporphyrinogen IX + 2 CO2 + 2 H2O. Its pathway is porphyrin-containing compound metabolism; protoporphyrin-IX biosynthesis; protoporphyrinogen-IX from coproporphyrinogen-III (O2 route): step 1/1. In terms of biological role, involved in the heme biosynthesis. Catalyzes the aerobic oxidative decarboxylation of propionate groups of rings A and B of coproporphyrinogen-III to yield the vinyl groups in protoporphyrinogen-IX. This is Oxygen-dependent coproporphyrinogen-III oxidase from Shewanella sp. (strain ANA-3).